A 301-amino-acid polypeptide reads, in one-letter code: Homoserine O-acetyltransferase (301 aa).

Residue C142 is the Acyl-thioester intermediate of the active site. Residues K163 and S192 each contribute to the substrate site. The Proton acceptor role is filled by H235. Residue E237 is part of the active site. R249 serves as a coordination point for substrate.

The protein belongs to the MetA family.

The protein localises to the cytoplasm. The enzyme catalyses L-homoserine + acetyl-CoA = O-acetyl-L-homoserine + CoA. It functions in the pathway amino-acid biosynthesis; L-methionine biosynthesis via de novo pathway; O-acetyl-L-homoserine from L-homoserine: step 1/1. Functionally, transfers an acetyl group from acetyl-CoA to L-homoserine, forming acetyl-L-homoserine. This is Homoserine O-acetyltransferase from Bacillus anthracis (strain A0248).